Consider the following 501-residue polypeptide: Spore development regulator VOSA (501 aa).

Disordered stretches follow at residues 26 to 55 (GQFGDPNLTPPQAETQMSAQASAQAVGQEP), 67 to 88 (PQRARVAQGKEKGTDRKPIDPP), and 228 to 274 (AMTT…DTRG). Residues 35–50 (PPQAETQMSAQASAQA) show a composition bias toward polar residues. A Velvet domain is found at 52–223 (GQEPEPDYKL…SDQGVRLRVR (172 aa)). Composition is skewed to basic and acidic residues over residues 67–85 (PQRARVAQGKEKGTDRKPI) and 237–252 (QHAEVAKKHSEWDRKQ). The segment covering 253-271 (TSAVSRHSSINENDSTPTD) has biased composition (polar residues). Residues 364 to 371 (MSSHHGYT) carry the Nuclear localization signal motif. 2 disordered regions span residues 378 to 455 (FAPH…QQTP) and 474 to 501 (PGQLVGTSAPSPHLGQGYRHGMINEPGA).

Belongs to the velvet family. VosA subfamily. In terms of assembly, forms a heterodimeric complex with VELB; the formation of the VELB-VOSA complex is light-dependent.

Its subcellular location is the nucleus. Component of the VELB-VOSA heterodimeric complex that plays a dual role in activating genes associated with spore maturation and repressing certain development-associated genes. The complex binds DNA through the DNA-binding domain of VOSA that recognizes an 11-nucleotide consensus sequence 5'-CTGGCCGCGGC-3' consisting of two motifs in the promoters of key developmental regulatory genes. Appears dispensable for the development and pathogenicity. The sequence is that of Spore development regulator VOSA from Pyricularia oryzae (strain 70-15 / ATCC MYA-4617 / FGSC 8958) (Rice blast fungus).